The following is a 178-amino-acid chain: Caveolin-1 (178 aa).

An N-acetylserine modification is found at Ser-2. The residue at position 2 (Ser-2) is a Phosphoserine. The tract at residues 2 to 94 is required for homooligomerization; sequence SGGKYVDSEG…WKASFTTFTV (93 aa). Over 2–104 the chain is Cytoplasmic; that stretch reads SGGKYVDSEG…TKYWFYRLLS (103 aa). At Lys-5 the chain carries N6-acetyllysine; alternate. Lys-5 is covalently cross-linked (Glycyl lysine isopeptide (Lys-Gly) (interchain with G-Cter in ubiquitin); alternate). Tyr-6 carries the phosphotyrosine modification. Residue Ser-9 is modified to Phosphoserine. Tyr-14 is subject to Phosphotyrosine; by ABL1. Residue Tyr-25 is modified to Phosphotyrosine. Residues Lys-26 and Lys-30 each participate in a glycyl lysine isopeptide (Lys-Gly) (interchain with G-Cter in ubiquitin) cross-link. At Ser-37 the chain carries Phosphoserine. Glycyl lysine isopeptide (Lys-Gly) (interchain with G-Cter in ubiquitin) cross-links involve residues Lys-39, Lys-47, and Lys-57. The segment at 82 to 94 is interaction with CAVIN3; that stretch reads DGIWKASFTTFTV. Positions 105–125 form an intramembrane region, helical; it reads ALFGIPMALIWGIYFAILSFL. The Cytoplasmic segment spans residues 126 to 178; the sequence is HIWAVVPCIKSFLIEIQCISRVYSIYVHTVCDPLFEAVGKIFSNVRINLQKEI. Residues 131-142 are interacts with SPRY1, SPRY2, SPRY3 and SPRY4; the sequence is VPCIKSFLIEIQ. Residues Cys-133, Cys-143, and Cys-156 are each lipidated (S-palmitoyl cysteine). The interval 149–160 is interacts with SPRY1, SPRY2, and SPRY4; that stretch reads SIYVHTVCDPLF. The interval 167–178 is interacts with SPRY1, SPRY2, SPRY3 and SPRY4; sequence FSNVRINLQKEI.

This sequence belongs to the caveolin family. In terms of assembly, homooligomer. Interacts (via the N-terminus) with DPP4; the interaction is direct. Forms a stable heterooligomeric complex with CAV2 that targets to lipid rafts and drives caveolae formation. Interacts with PACSIN2; this interaction induces membrane tubulation. Interacts with BMX, BTK, CTNNB1, CDH1, GLIPR2, JUP, NOSTRIN, SNAP25 and STX1A. Interacts with SLC7A9. Interacts with TGFBR1. Interacts with CAVIN3 (via leucine-zipper domain) in a cholesterol-sensitive manner. Interacts with CAVIN1. Interacts with EHD2 in a cholesterol-dependent manner. Forms a ternary complex with UBXN6 and VCP; mediates CAV1 targeting to lysosomes for degradation. Interacts with ABCG1; this interaction regulates ABCG1-mediated cholesterol efflux. Interacts with NEU3; this interaction enhances NEU3 sialidase activity within caveola. Interacts (via C-terminus) with SPRY1, SPRY2 (via C-terminus), SPRY3, and SPRY4. Interacts with IGFBP5; this interaction allows trafficking of IGFBP5 from the plasma membrane to the nucleus. Post-translationally, phosphorylated at Tyr-14 by ABL1 in response to oxidative stress. Ubiquitinated. Undergo monoubiquitination and multi- and/or polyubiquitination. Monoubiquitination of N-terminal lysines promotes integration in a ternary complex with UBXN6 and VCP which promotes oligomeric CAV1 targeting to lysosomes for degradation. Ubiquitinated by ZNRF1; leading to degradation and modulation of the TLR4-mediated immune response.

The protein resides in the golgi apparatus membrane. Its subcellular location is the cell membrane. The protein localises to the membrane. It is found in the caveola. It localises to the membrane raft. Its function is as follows. May act as a scaffolding protein within caveolar membranes. Forms a stable heterooligomeric complex with CAV2 that targets to lipid rafts and drives caveolae formation. Mediates the recruitment of CAVIN proteins (CAVIN1/2/3/4) to the caveolae. Interacts directly with G-protein alpha subunits and can functionally regulate their activity. Involved in the costimulatory signal essential for T-cell receptor (TCR)-mediated T-cell activation. Its binding to DPP4 induces T-cell proliferation and NF-kappa-B activation in a T-cell receptor/CD3-dependent manner. Recruits CTNNB1 to caveolar membranes and may regulate CTNNB1-mediated signaling through the Wnt pathway. Negatively regulates TGFB1-mediated activation of SMAD2/3 by mediating the internalization of TGFBR1 from membrane rafts leading to its subsequent degradation. Binds 20(S)-hydroxycholesterol (20(S)-OHC). The polypeptide is Caveolin-1 (CAV1) (Chlorocebus aethiops (Green monkey)).